The primary structure comprises 27 residues: Allergen C-C (27 aa).

It belongs to the protease inhibitor I6 (cereal trypsin/alpha-amylase inhibitor) family.

The protein localises to the secreted. The polypeptide is Allergen C-C (Triticum aestivum (Wheat)).